The chain runs to 433 residues: NADH-quinone oxidoreductase subunit D (433 aa).

It belongs to the complex I 49 kDa subunit family. In terms of assembly, NDH-1 is composed of 14 different subunits. Subunits NuoB, C, D, E, F, and G constitute the peripheral sector of the complex.

It is found in the cell membrane. It catalyses the reaction a quinone + NADH + 5 H(+)(in) = a quinol + NAD(+) + 4 H(+)(out). Functionally, NDH-1 shuttles electrons from NADH, via FMN and iron-sulfur (Fe-S) centers, to quinones in the respiratory chain. The immediate electron acceptor for the enzyme in this species is believed to be a menaquinone. Couples the redox reaction to proton translocation (for every two electrons transferred, four hydrogen ions are translocated across the cytoplasmic membrane), and thus conserves the redox energy in a proton gradient. This Cutibacterium acnes (strain DSM 16379 / KPA171202) (Propionibacterium acnes) protein is NADH-quinone oxidoreductase subunit D.